The following is a 121-amino-acid chain: Large ribosomal subunit protein uL18 (121 aa).

It belongs to the universal ribosomal protein uL18 family. In terms of assembly, part of the 50S ribosomal subunit; part of the 5S rRNA/L5/L18/L25 subcomplex. Contacts the 5S and 23S rRNAs.

In terms of biological role, this is one of the proteins that bind and probably mediate the attachment of the 5S RNA into the large ribosomal subunit, where it forms part of the central protuberance. This Desulfotalea psychrophila (strain LSv54 / DSM 12343) protein is Large ribosomal subunit protein uL18.